The chain runs to 33 residues: Gastrin (33 aa).

Pyrrolidone carboxylic acid occurs at positions 1 and 18. Position 28 is a sulfotyrosine (Y28). F33 carries the phenylalanine amide modification.

This sequence belongs to the gastrin/cholecystokinin family.

Its subcellular location is the secreted. In terms of biological role, gastrin stimulates the stomach mucosa to produce and secrete hydrochloric acid and the pancreas to secrete its digestive enzymes. It also stimulates smooth muscle contraction and increases blood circulation and water secretion in the stomach and intestine. The polypeptide is Gastrin (GAST) (Didelphis virginiana (North American opossum)).